The chain runs to 196 residues: Glycerol-3-phosphate acyltransferase (196 aa).

5 helical membrane passes run 4-24 (FYIM…VVLT), 53-73 (LGVL…LIAI), 78-98 (LGDA…CYPV), 114-134 (IFLV…ALLV), and 140-160 (VSLG…FTEG).

Belongs to the PlsY family. Probably interacts with PlsX.

It localises to the cell inner membrane. The catalysed reaction is an acyl phosphate + sn-glycerol 3-phosphate = a 1-acyl-sn-glycero-3-phosphate + phosphate. It participates in lipid metabolism; phospholipid metabolism. Its function is as follows. Catalyzes the transfer of an acyl group from acyl-phosphate (acyl-PO(4)) to glycerol-3-phosphate (G3P) to form lysophosphatidic acid (LPA). This enzyme utilizes acyl-phosphate as fatty acyl donor, but not acyl-CoA or acyl-ACP. In Syntrophotalea carbinolica (strain DSM 2380 / NBRC 103641 / GraBd1) (Pelobacter carbinolicus), this protein is Glycerol-3-phosphate acyltransferase.